The primary structure comprises 480 residues: Serine carboxypeptidase-like 35 (480 aa).

The first 20 residues, 1 to 20 (MKKNALWLLCILVLPAIACG), serve as a signal peptide directing secretion. N-linked (GlcNAc...) asparagine glycans are attached at residues Asn79 and Asn146. 3 cysteine pairs are disulfide-bonded: Cys95–Cys363, Cys257–Cys270, and Cys294–Cys331. Residue Ser188 is part of the active site. The N-linked (GlcNAc...) asparagine glycan is linked to Asn265. Asn352 carries an N-linked (GlcNAc...) asparagine glycan. Active-site residues include Asp399 and His452.

It belongs to the peptidase S10 family. Expressed in seedlings, flowers and siliques.

The protein resides in the secreted. Functionally, probable carboxypeptidase. The chain is Serine carboxypeptidase-like 35 (SCPL35) from Arabidopsis thaliana (Mouse-ear cress).